The primary structure comprises 471 residues: UDP-N-acetylmuramate--L-alanine ligase (471 aa).

ATP is bound at residue 112–118 (GTHGKTT).

It belongs to the MurCDEF family.

It localises to the cytoplasm. It catalyses the reaction UDP-N-acetyl-alpha-D-muramate + L-alanine + ATP = UDP-N-acetyl-alpha-D-muramoyl-L-alanine + ADP + phosphate + H(+). It functions in the pathway cell wall biogenesis; peptidoglycan biosynthesis. Its function is as follows. Cell wall formation. The protein is UDP-N-acetylmuramate--L-alanine ligase of Cupriavidus metallidurans (strain ATCC 43123 / DSM 2839 / NBRC 102507 / CH34) (Ralstonia metallidurans).